A 656-amino-acid chain; its full sequence is MASSGLAYPDRFYAAAAYAGFGAGGATSSSAISRFQNDVALLLYGLYQQATVGPCNVPKPRAWNPVEQSKWTSWHGLGSMPSAEAMRLFVKILEEEDPGWYSRVPEFNPEPVVDIEMHKPKEDPKVILASTNGTSVPEPKTISENGSSVETQDKVVILEGLSAVSVHEEWTPLSVNGQRPKPRYEHGATVVQDKMYIFGGNHNGRYLSDLQALDLKSLTWSKIDAKFQAGSTDSSKSAQVSSCAGHSLISWGNKFFSVAGHTKDPSENITVKEFDPHTCTWSIVKTYGKPPVSRGGQSVTLVGTTLVLFGGEDAKRCLLNDLHILDLETMTWDDVDAIGTPPPRSDHAAACHADRYLLIFGGGSHATCFNDLHVLDLQTMEWSRPKQQGLAPSPRAGHAGATVGENWYIVGGGNNKSGVSETLVLNMSTLTWSVVSSVEGRVPLASEGMTLVHSNYNGDDYLISFGGYNGRYSNEVFALKLTLKSDLQSKTKEHASDGTSSVLEPEVELSHDGKIREIAMDSADSDLKKDDANELLVALKAEKEELEAALNREQVQTIQLKEEIAEAEARNAELTKELQTVRGQLAAEQSRCFKLEVDVAELRQKLQSMDALEREVELLRRQKAASEQAALEAKQRQSSSGMWGWLVGTPPDKSES.

Positions 8 to 102 (YPDRFYAAAA…LEEEDPGWYS (95 aa)) constitute an ACB domain. An acyl-CoA contacts are provided by residues 44–48 (YGLYQ) and Lys70. Positions 129-148 (ASTNGTSVPEPKTISENGSS) are disordered. Kelch repeat units follow at residues 194-241 (KMYI…AQVS), 254-304 (KFFS…LVGT), 305-354 (TLVL…CHAD), 356-405 (YLLI…TVGE), 406-454 (NWYI…LVHS), and 461-507 (YLIS…EPEV). The stretch at 527–636 (LKKDDANELL…EQAALEAKQR (110 aa)) forms a coiled coil. The disordered stretch occupies residues 627 to 656 (EQAALEAKQRQSSSGMWGWLVGTPPDKSES).

Belongs to the ACBP family. In terms of tissue distribution, highly expressed in leaves. Expressed in roots and seeds.

The protein resides in the peroxisome. Its function is as follows. Binds medium- and long-chain acyl-CoA esters with high affinity. Can interact in vitro with linoleoyl-CoA and linolenoyl-CoA. Binds phosphatidic acid (PA) and phosphatidylcholine (PC) in vitro. May play a role in the biosynthesis of phospholipids. May be involved in lipid degradation via peroxisomal beta-oxydation. This chain is Acyl-CoA-binding domain-containing protein 6, found in Oryza sativa subsp. japonica (Rice).